The following is an 80-amino-acid chain: UPF0180 protein GK1051 (80 aa).

This sequence belongs to the UPF0180 family.

The sequence is that of UPF0180 protein GK1051 from Geobacillus kaustophilus (strain HTA426).